The primary structure comprises 200 residues: Urease accessory protein UreE (200 aa).

The disordered stretch occupies residues 171-200 (HHGHAHPHPHDHDHQHGPGCAHGRHGHDHH).

The protein belongs to the UreE family.

The protein localises to the cytoplasm. Involved in urease metallocenter assembly. Binds nickel. Probably functions as a nickel donor during metallocenter assembly. The polypeptide is Urease accessory protein UreE (Burkholderia vietnamiensis (strain G4 / LMG 22486) (Burkholderia cepacia (strain R1808))).